Here is a 712-residue protein sequence, read N- to C-terminus: Polyribonucleotide nucleotidyltransferase (712 aa).

Mg(2+)-binding residues include Asp-484 and Asp-490. The KH domain maps to 550 to 609; that stretch reads PKYKTMDVNPEKIRVLIGPGGKNIKAIIEETGSDVEIQDSGVVNIFAPDTPTLDKTIKLI. One can recognise an S1 motif domain in the interval 619–686; the sequence is GEVYDGIVKD…KGGKYSLSRK (68 aa).

Belongs to the polyribonucleotide nucleotidyltransferase family. Requires Mg(2+) as cofactor.

The protein localises to the cytoplasm. It carries out the reaction RNA(n+1) + phosphate = RNA(n) + a ribonucleoside 5'-diphosphate. Functionally, involved in mRNA degradation. Catalyzes the phosphorolysis of single-stranded polyribonucleotides processively in the 3'- to 5'-direction. The polypeptide is Polyribonucleotide nucleotidyltransferase (Brachyspira hyodysenteriae (strain ATCC 49526 / WA1)).